A 444-amino-acid polypeptide reads, in one-letter code: MSKTYHFIGIKGSGMSALALMLHQMGHKVQGSDVEKYYFTQRGLEQAGITILPFDEKNLDGDMEIIAGNAFRPDNNVEIAYADQNGISYKRYHEFLGSFMRDFVSMGVAGAHGKTSTTGMLSHVLSHITDTSFLIGDGTGRGSANAKYFVFESDEYERHFMPYHPEYSIITNIDFDHPDYFTSLEDVFNAFNDYAKQITKGLFVYGEDAELRKITSDAPIYYYGFEAEGNDFVASDLLRSITGSTFTVHFRGQNLGQFHIPTFGRHNIMNATAVIGLLYTAGFDLNLVREHLKTFAGVKRRFTEKIVNDTVIIDDFAHHPTEIIATLDAARQKYPSKEIVAVFQPHTFTRTIALLDDFAHALNQADAVYLAQIYGSAREVDHGDVKVEDLANKINKKHQVITVENVSPLLDHDNAVYVFMGAGDIQTYEYSFERLLSNLTSNVQ.

110–116 (GAHGKTS) provides a ligand contact to ATP.

This sequence belongs to the MurCDEF family. Post-translationally, phosphorylated by StkP in vitro. Dephosphorylated by PhpP in vitro.

It localises to the cytoplasm. The enzyme catalyses UDP-N-acetyl-alpha-D-muramate + L-alanine + ATP = UDP-N-acetyl-alpha-D-muramoyl-L-alanine + ADP + phosphate + H(+). It functions in the pathway cell wall biogenesis; peptidoglycan biosynthesis. Cell wall formation. The chain is UDP-N-acetylmuramate--L-alanine ligase from Streptococcus pneumoniae serotype 4 (strain ATCC BAA-334 / TIGR4).